A 382-amino-acid polypeptide reads, in one-letter code: Probable cytosolic iron-sulfur protein assembly protein 1 (382 aa).

7 WD repeats span residues 9–48 (AHHD…KFPR), 55–107 (THTR…DNDE), 138–178 (GHEH…EEFE), 185–224 (EHQQ…DDWG), 231–278 (GHQG…SETN), 303–342 (AHTY…WEIE), and 349–382 (HGVH…NVWE).

It belongs to the WD repeat CIA1 family. As to quaternary structure, interacts with NAR1.

Its subcellular location is the cytoplasm. The protein resides in the nucleus. Its function is as follows. Essential component of the cytosolic iron-sulfur (Fe/S) protein assembly machinery. Required for the maturation of extramitochondrial Fe/S proteins. The chain is Probable cytosolic iron-sulfur protein assembly protein 1 from Meyerozyma guilliermondii (strain ATCC 6260 / CBS 566 / DSM 6381 / JCM 1539 / NBRC 10279 / NRRL Y-324) (Yeast).